Reading from the N-terminus, the 573-residue chain is MLO-like protein 11 (573 aa).

At 1–19 the chain is on the extracellular side; the sequence is MGEGEENGNEADSNERSLA. The chain crosses the membrane as a helical span at residues 20–40; it reads LSPTWSVAIVLTVFVVVSLIV. Residues 41 to 69 lie on the Cytoplasmic side of the membrane; it reads ERSIYRLSTWLRKTKRKPMFAALEKMKEE. Residues 70 to 90 traverse the membrane as a helical segment; sequence LMLLGFISLLLTATSSTIANI. The Extracellular portion of the chain corresponds to 91–163; sequence CVPSSFYNDR…SYEGLEQLHR (73 aa). Residues 164–184 form a helical membrane-spanning segment; that stretch reads FIFIMAVTHVTYSCLTMLLAI. Residues 185 to 287 lie on the Cytoplasmic side of the membrane; the sequence is VKIHSWRIWE…IRSMEEEFQR (103 aa). 2 helical membrane-spanning segments follow: residues 288–308 and 309–329; these read IVGV…FNIK and GSNL…LVGA. Residues 330-371 lie on the Cytoplasmic side of the membrane; the sequence is KLQHVIATLALENAGLTEYPSGVKLRPRDELFWFNKPELLLS. A helical membrane pass occupies residues 372-392; the sequence is LIHFILFQNSFELASFFWFWW. The Extracellular segment spans residues 393–411; the sequence is QFGYSSCFLKNHYLVYFRL. Residues 412-432 form a helical membrane-spanning segment; that stretch reads LLGFAGQFLCSYSTLPLYALV. Over 433 to 573 the chain is Cytoplasmic; sequence TQMGTNYKAA…SSSLPSEKRV (141 aa). A calmodulin-binding region spans residues 446-467; it reads QRIRETIRGWGKATRRKRRHGL. Disordered regions lie at residues 500–532 and 554–573; these read EQQR…TSSR and RSEP…EKRV. Over residues 507–516 the composition is skewed to low complexity; sequence EQGTTELELQ. Positions 561–573 are enriched in polar residues; the sequence is LSRSSSLPSEKRV.

It belongs to the MLO family.

It localises to the membrane. Functionally, may be involved in modulation of pathogen defense and leaf cell death. Activity seems to be regulated by Ca(2+)-dependent calmodulin binding and seems not to require heterotrimeric G proteins. The polypeptide is MLO-like protein 11 (MLO11) (Arabidopsis thaliana (Mouse-ear cress)).